Here is a 177-residue protein sequence, read N- to C-terminus: Large ribosomal subunit protein uL6 (177 aa).

The protein belongs to the universal ribosomal protein uL6 family. In terms of assembly, part of the 50S ribosomal subunit.

This protein binds to the 23S rRNA, and is important in its secondary structure. It is located near the subunit interface in the base of the L7/L12 stalk, and near the tRNA binding site of the peptidyltransferase center. The protein is Large ribosomal subunit protein uL6 of Rhodopseudomonas palustris (strain BisB18).